The chain runs to 538 residues: Phosphoenolpyruvate carboxykinase (ATP) (538 aa).

R64, Y205, and K211 together coordinate substrate. ATP-binding positions include K211, H230, and 246–254 (GLSGTGKTT). Residues K211 and H230 each coordinate Mn(2+). A Mn(2+)-binding site is contributed by D267. Residues E295, R331, 447–448 (RI), and T453 each bind ATP. Residue R331 participates in substrate binding.

This sequence belongs to the phosphoenolpyruvate carboxykinase (ATP) family. Monomer. Mn(2+) serves as cofactor.

The protein resides in the cytoplasm. The enzyme catalyses oxaloacetate + ATP = phosphoenolpyruvate + ADP + CO2. The protein operates within carbohydrate biosynthesis; gluconeogenesis. In terms of biological role, involved in the gluconeogenesis. Catalyzes the conversion of oxaloacetate (OAA) to phosphoenolpyruvate (PEP) through direct phosphoryl transfer between the nucleoside triphosphate and OAA. This is Phosphoenolpyruvate carboxykinase (ATP) from Histophilus somni (strain 129Pt) (Haemophilus somnus).